Consider the following 613-residue polypeptide: Ribosome-associated molecular chaperone SSB1 (613 aa).

The tract at residues 1-391 (MAEGVFSGAI…ILTGSNLSDD (391 aa)) is nucleotide binding domain (NBD). ATP contacts are provided by residues 16-18 (TTY), Lys-73, 205-207 (GGT), 271-278 (ERAKRTLS), and Gly-342. Positions 392–402 (TKDLLLLDVAP) are inter-domain linker. Residues 403-613 (LSLGVAMQGD…RVVTKAMATR (211 aa)) are substrate binding domain (SBD). The interval 516–612 (SEDIEKMVSQ…KRVVTKAMAT (97 aa)) is lid domain (SBDalpha). The Nuclear export signal motif lies at 574-582 (VEAALADAF).

It belongs to the heat shock protein 70 family. Ssb-type Hsp70 subfamily. In terms of assembly, binds to ribosomes. Binds close to the ribosomal tunnel exit via contacts with both ribosomal proteins and rRNA. Directly interacts with nascent polypeptides. This interaction is dependent on the ribosome-associated complex (RAC). Interacts with SSE1. Interacts with FES1.

Its subcellular location is the cytoplasm. The enzyme catalyses ATP + H2O = ADP + phosphate + H(+). Ribosome-bound, Hsp70-type chaperone that assists in the cotranslational folding of newly synthesized proteins in the cytosol. Stimulates folding by interacting with nascent chains, binding to short, largely hydrophobic sequences exposed by unfolded proteins, thereby stabilizing longer, more slowly translated, and aggregation-prone nascent polypeptides and domains that cannot fold stably until fully synthesized. The Hsp70-protein substrate interaction depends on ATP-binding and on allosteric regulation between the NBD and the SBD. The ATP-bound state is characterized by a fast exchange rate of substrate (low affinity state), while in the ADP-bound state exchange is much slower (high affinity state). During the Hsp70 cycle, the chaperone switches between the ATP-bound state (open conformation) and the ADP-bound state (closed conformation) by major conformational rearrangements involving mainly the lid domain. Ssb cooperates with a specific Hsp40/Hsp70 co-chaperone termed the ribosome-associated complex (RAC), which stimulates the ATPase activity of the ribosome-associated pool of Ssbs and switches it to the high affinity substrate binding state. Hsp110 chaperone SSE1 and FES1 act as nucleotide exchange factors that cause substrate release. The polypeptide is Ribosome-associated molecular chaperone SSB1 (SSB1) (Eremothecium gossypii (strain ATCC 10895 / CBS 109.51 / FGSC 9923 / NRRL Y-1056) (Yeast)).